A 4684-amino-acid chain; its full sequence is Plectin (4684 aa).

The tract at residues 1–1470 is globular 1; sequence MVAGMLMPRD…SELTTLTSQY (1470 aa). Residues Phe-20 and Arg-21 each carry the phosphoserine modification. The residue at position 26 (Val-26) is a Phosphotyrosine. The residue at position 42 (Gly-42) is a Phosphoserine. Phosphothreonine is present on Thr-113. Phosphoserine is present on residues Ser-125 and Ser-149. A disordered region spans residues 144–179; that stretch reads ELEEVSPETPVVPATTQRTLARPGPEPAPATDERDR. An actin-binding region spans residues 175–400; sequence DERDRVQKKT…YVSSLYDAMP (226 aa). Calponin-homology (CH) domains follow at residues 179–282 and 295–400; these read RVQK…LHFQ and MTAK…DAMP. Residues 645–710 form a Spectrin 1 repeat; it reads LQSVQRRPEL…SIEEFRAKIE (66 aa). Ser-720 bears the Phosphoserine mark. Spectrin repeat units follow at residues 740–824 and 837–930; these read KLLN…REDH and LQTQ…AVVQ. The SH3 domain occupies 941-998; sequence RGRLPLLAVCDYKQVEVTVHKGDECQLVGPAQPSHWKVLSSSGSEAAVPSVCFLVPPP. A required for interaction with intermediate filament proteins region spans residues 964–4574; it reads ECQLVGPAQP…VGAYSKYLTC (3611 aa). Ser-1047 carries the post-translational modification Phosphoserine. A Spectrin 4 repeat occupies 1315–1415; sequence RERVAQLLER…QRFAKQYINA (101 aa). Ser-1435 bears the Phosphoserine mark. Positions 1469 to 2756 form a coiled coil; that stretch reads QYIKFISETL…AHSEEVTASQ (1288 aa). The segment at 1471-2755 is central fibrous rod domain; that stretch reads IKFISETLRR…LAHSEEVTAS (1285 aa). The tract at residues 1618 to 1650 is disordered; the sequence is RAEEAEAQKRQAQEEAERLRRQVQDESQRKRQA. Residue Ser-1721 is modified to Phosphoserine. Residue Lys-1725 is modified to N6-acetyllysine. Residue Ser-1732 is modified to Phosphoserine. 3 disordered regions span residues 1794–1836, 2105–2139, and 2217–2307; these read LAQA…KQRQ, EAAR…EAAR, and RGEA…MEKH. Basic and acidic residues-rich tracts occupy residues 1798–1836, 2105–2128, and 2217–2258; these read EAEK…KQRQ, EAAR…ERVQ, and RGEA…KQSA. Over residues 2259 to 2272 the composition is skewed to low complexity; that stretch reads EEQAQARAQAQAAA. The span at 2273-2288 shows a compositional bias: basic and acidic residues; it reads EKLRKEAEQEAARRAQ. Ser-2631 is subject to Phosphoserine. An N6-acetyllysine modification is found at Lys-2636. Disordered regions lie at residues 2668–2707 and 2763–2784; these read REEQ…RRKQ and LPNG…HSFD. Residues 2679-2707 show a composition bias toward basic and acidic residues; that stretch reads EQERQRLVASMEEARRRQHEAEEGVRRKQ. Residues 2756-4684 are globular 2; the sequence is QVAATKTLPN…SLGGPESAVA (1929 aa). Ser-2782 and Ser-2802 each carry phosphoserine. 5 Plectin repeats span residues 2826–2863, 2864–2901, 2902–2939, 2940–2977, and 2981–3015; these read RHYL…PGTA, LILL…PELH, HKLL…REHG, IRLL…EEMN, and ADPS…PETG. Phosphothreonine is present on Thr-2886. Phosphotyrosine is present on Tyr-3033. Ser-3036 carries the phosphoserine modification. 2 positions are modified to N6-acetyllysine: Lys-3053 and Lys-3091. 6 Plectin repeats span residues 3116–3153, 3154–3191, 3192–3229, 3230–3267, 3268–3305, and 3306–3343; these read SLVP…VDTV, RRAL…SDMA, VALL…PEFH, EKLL…REQG, LRLL…EETS, and RALS…QLTG. Positions 3310–3331 are disordered; that stretch reads APRADAKAYSDPSTGEPATYGE. At Tyr-3362 the chain carries Phosphotyrosine. An N6-acetyllysine modification is found at Lys-3420. 5 Plectin repeats span residues 3485-3522, 3523-3560, 3561-3598, 3599-3636, and 3640-3674; these read RTLL…ATTA, ALLL…PELH, EQLL…RQHG, IRLL…EEMN, and ADPS…PETG. Phosphoserine is present on Ser-3580. A Phosphothreonine modification is found at Thr-3785. Plectin repeat units lie at residues 3820–3857, 3858–3895, 3896–3933, 3934–3971, and 3975–4008; these read WCYL…AEVA, RLLL…PELH, DRLL…TEEA, LRLL…KDTH, and SEPS…DGTG. Positions 3956–4293 are required for interaction with type2 keratins, DES and VIM; sequence PLEVAYQRGY…ETGKEMSVYE (338 aa). The residue at position 4030 (Thr-4030) is a Phosphothreonine. Ser-4054 is modified (phosphoserine). Plectin repeat units lie at residues 4063–4100, 4101–4138, 4139–4176, 4177–4214, 4218–4252, 4265–4305, and 4319–4356; these read QKFL…PGTA, FELL…PEFK, DKLL…KDHG, IRLL…EEMN, TDPS…PQTG, RKTS…HQTY, and TISS…RSAL. The tract at residues 4250–4300 is binding to intermediate filaments; it reads QTGLCLLPLKEKKRERKTSSKSSVRKRRVVIVDPETGKEMSVYEAYRKGLI. Residues Ser-4382, Ser-4384, Ser-4385, Ser-4386, Ser-4389, Ser-4390, Ser-4391, and Ser-4392 each carry the phosphoserine modification. The residue at position 4393 (Tyr-4393) is a Phosphotyrosine. Ser-4396, Ser-4400, and Ser-4406 each carry phosphoserine. 5 Plectin repeats span residues 4408-4445, 4446-4483, 4484-4521, 4522-4559, and 4560-4597; these read SDPT…NITG, QRLL…KIMV, DRIN…YEAG, QRFL…ARTA, and QKLR…EGTG. At Thr-4411 the chain carries Phosphothreonine. The interval 4505 to 4574 is required for efficient interaction with KRT5 and KRT14 heterodimers; that stretch reads MSAAQALKKG…VGAYSKYLTC (70 aa). Thr-4539 carries the phosphothreonine; by CDK1 modification. 2 positions are modified to phosphoserine: Ser-4607 and Ser-4613. Residues 4611-4678 are compositionally biased toward low complexity; sequence YYSPYSVSGS…ASGSSASLGG (68 aa). The disordered stretch occupies residues 4611–4684; it reads YYSPYSVSGS…SLGGPESAVA (74 aa). Tyr-4615 is subject to Phosphotyrosine. A phosphoserine mark is found at Ser-4616, Ser-4618, and Ser-4622. Residue Thr-4623 is modified to Phosphothreonine. A 4 X 4 AA tandem repeats of G-S-R-X region spans residues 4625–4640; it reads GSRTGSRTGSRAGSRR. Ser-4626 is subject to Phosphoserine. Omega-N-methylarginine occurs at positions 4627 and 4640. Residues Ser-4642, Ser-4672, and Ser-4675 each carry the phosphoserine modification.

Belongs to the plakin or cytolinker family. Homodimer or homotetramer. Interacts (via actin-binding domain) with SYNE3. Interacts (via calponin-homology (CH) 1 domain) with VIM (via rod region). Interacts (via N-terminus) with DST isoform 2 (via N-terminus). Interacts with FER. Interacts with TOR1A. Interacts with ANK3. Identified in complexes that contain VIM, EZR, AHNAK, BFSP1, BFSP2, ANK2, PLEC, PRX and spectrin. Interacts with COL17A1. In terms of assembly, interacts with KRT14, heterodimers consisting of KRT8 and KRT18, heterodimers consisting of KRT5 and KRT14, heterodimers consisting of KRT14 and KRT15, and heterodimers consisting of KRT1 and KRT10. Interacts with DES and VIM. Phosphorylated by CDK1; regulates dissociation from intermediate filaments during mitosis. In terms of tissue distribution, widely expressed with highest levels in muscle, heart, placenta and spinal cord.

It is found in the cytoplasm. It localises to the cytoskeleton. The protein resides in the cell junction. Its subcellular location is the hemidesmosome. The protein localises to the cell projection. It is found in the podosome. In terms of biological role, interlinks intermediate filaments with microtubules and microfilaments and anchors intermediate filaments to desmosomes or hemidesmosomes. Could also bind muscle proteins such as actin to membrane complexes in muscle. May be involved not only in the filaments network, but also in the regulation of their dynamics. Structural component of muscle. Isoform 9 plays a major role in the maintenance of myofiber integrity. The sequence is that of Plectin (PLEC) from Homo sapiens (Human).